Consider the following 362-residue polypeptide: 3-dehydroquinate synthase (362 aa).

NAD(+) is bound by residues 73–78, 107–111, 131–132, Lys144, Lys153, and 171–174; these read DAEAGK, GAATD, TT, and TLQT. Zn(2+) is bound by residues Glu186, His249, and His265.

The protein belongs to the sugar phosphate cyclases superfamily. Dehydroquinate synthase family. The cofactor is NAD(+). Requires Co(2+) as cofactor. Zn(2+) serves as cofactor.

It is found in the cytoplasm. It carries out the reaction 7-phospho-2-dehydro-3-deoxy-D-arabino-heptonate = 3-dehydroquinate + phosphate. The protein operates within metabolic intermediate biosynthesis; chorismate biosynthesis; chorismate from D-erythrose 4-phosphate and phosphoenolpyruvate: step 2/7. Its function is as follows. Catalyzes the conversion of 3-deoxy-D-arabino-heptulosonate 7-phosphate (DAHP) to dehydroquinate (DHQ). This Mycobacterium bovis (strain ATCC BAA-935 / AF2122/97) protein is 3-dehydroquinate synthase.